We begin with the raw amino-acid sequence, 800 residues long: Internalin A (800 aa).

The N-terminal stretch at Met-1–Ala-35 is a signal peptide. The 41-residue stretch at Ala-36–Asp-76 folds into the LRRNT domain. LRR repeat units follow at residues Gln-77–Asn-98, Asn-99–Thr-120, Lys-121–Thr-142, Asn-143–Thr-164, Asn-165–Thr-186, Asn-187–Thr-207, Thr-208–Thr-229, Asn-230–Thr-251, Asn-252–Thr-273, Asn-274–Thr-295, Lys-296–Thr-317, Ala-318–Lys-339, Asn-340–Thr-361, Lys-362–Thr-383, and Asn-384–Thr-405. Residues Ala-416–Asp-505 form the LRRCT domain. Residues Leu-518–Gly-587 form a B-1 repeat. Residues Leu-518–Asn-706 form a 3 X approximate tandem repeats, type B region. A B-2 repeat occupies Leu-588–Gly-657. One copy of the B-3 repeat lies at Leu-658–Asn-706. The segment at Lys-705–Tyr-757 is disordered. A compositionally biased stretch (low complexity) spans Pro-711–Thr-753. Residues Leu-767–Gly-771 carry the LPXTG sorting signal motif. Pentaglycyl murein peptidoglycan amidated threonine is present on Thr-770. Positions Gly-771–Lys-800 are cleaved as a propeptide — removed by sortase A.

This sequence belongs to the internalin family.

The protein resides in the secreted. Its subcellular location is the cell wall. Mediates the entry of Listeria monocytogenes into cells. Binds to host receptor cadherin-1 (E-cadherin, CDH1). This Listeria monocytogenes serotype 1/2a (strain 10403S) protein is Internalin A (inlA).